We begin with the raw amino-acid sequence, 780 residues long: Cullin-5 (780 aa).

S34 bears the Phosphoserine mark. T210 carries the phosphothreonine modification. One can recognise a Cullin neddylation domain in the interval 711 to 772 (RILRTQEAII…HRYIRRDEAD (62 aa)). A Glycyl lysine isopeptide (Lys-Gly) (interchain with G-Cter in NEDD8) cross-link involves residue K724.

The protein belongs to the cullin family. Component of multiple cullin-5-RING E3 ubiquitin-protein ligase complexes (ECS complexes, also named CRL5 complexes) formed of CUL5, Elongin BC (ELOB and ELOC), RNF7/RBX2 and a variable SOCS box domain-containing protein as substrate-specific recognition component. CUL5-containing ECS complexes specifically contain RNF7/RBX2, and not RBX1, as catalytic subunit. Component of the ECS(ASB2) complex with the substrate recognition component ASB2. Component of the ECS(ASB6) complex with the substrate recognition component ASB6. Component of the ECS(ASB7) complex with the substrate recognition component ASB7. Component of the ECS(ASB9) complex with the substrate recognition component ASB9. Component of the ECS(ASB11) complex with the substrate recognition component ASB11. Component of the ECS(ASB12) complex with the substrate recognition component ASB12. Component of the ECS(LRRC41) complex with the substrate recognition component LRRC41. Component of the ECS(SOCS1) complex with the substrate recognition component SOCS1. Component of the ECS(SOCS2) complex with the substrate recognition component SOCS2. Component of the ECS(WSB1) complex with the substrate recognition subunit WSB1. Component of the ECS(SOCS3) complex with the substrate recognition component SOCS3. Component of the ECS(SOCS7) complex with the substrate recognition component SOCS7. Component of the ECS(SPSB1) complex with the substrate recognition component SPSB1. Component of the ECS(SPSB3) complex with the substrate recognition component SPSB3. Component of the ECS(SPSB2) complex with the substrate recognition component SPSB2. Component of the ECS(SPSB4) complex with the substrate recognition component SPSB4. Component of the ECS(RAB40) complex with the substrate recognition subunit RAB40A, RAB40B or RAB40C. Component of the ECS(KLHDC1) complex with the substrate recognition component KLHDC1. Component of the ECS(PCMTD1) complex with the substrate recognition subunit PCMTD1. May also form complexes containing RBX1 and ELOA or VHL; additional evidence is however required to confirm this result in vivo. Interacts (when neddylated) with ARIH2; leading to activate the E3 ligase activity of ARIH2. Interacts with ERCC6; the interaction is induced by DNA damaging agents or inhibitors of RNA polymerase II elongation. Interacts with ELOA (via the BC-box). Interacts (unneddylated form) with DCUN1D1, DCUN1D2, DCUN1D3, DCUN1D4 and DCUN1D5; these interactions promote the cullin neddylation. In terms of processing, neddylated; which enhances the ubiquitination activity of ECS complexes and prevents binding of the inhibitor CAND1. Deneddylated via its interaction with the COP9 signalosome (CSN).

It is found in the nucleus. It participates in protein modification; protein ubiquitination. Core component of multiple cullin-5-RING E3 ubiquitin-protein ligase complexes (ECS complexes, also named CRL5 complexes), which mediate the ubiquitination and subsequent proteasomal degradation of target proteins. Acts a scaffold protein that contributes to catalysis through positioning of the substrate and the ubiquitin-conjugating enzyme. The functional specificity of the E3 ubiquitin-protein ligase complex depends on the variable SOCS box-containing substrate recognition component. Acts as a key regulator of neuron positioning during cortex development: component of various SOCS-containing ECS complexes, such as the ECS(SOCS7) complex, that regulate reelin signaling by mediating ubiquitination and degradation of DAB1. ECS(SOCS1) seems to direct ubiquitination of JAK2. The ECS(SOCS2) complex mediates the ubiquitination and subsequent proteasomal degradation of phosphorylated EPOR and GHR. The ECS(SPSB3) complex catalyzes ubiquitination of nuclear CGAS. ECS(KLHDC1) complex is part of the DesCEND (destruction via C-end degrons) pathway and mediates ubiquitination and degradation of truncated SELENOS selenoprotein produced by failed UGA/Sec decoding, which ends with a glycine. The ECS(ASB9) complex mediates ubiquitination and degradation of CKB. As part of some ECS complex, promotes 'Lys-11'-linked ubiquitination and degradation of BTRC. As part of a multisubunit ECS complex, polyubiquitinates monoubiquitinated POLR2A. As part of the ECS(RAB40C) complex, mediates ANKRD28 ubiquitination and degradation, thereby regulating protein phosphatase 6 (PP6) complex activity and focal adhesion assembly during cell migration. As part of the ECS(RAB40A) complex, mediates RHOU 'Lys-48'-linked ubiquitination and degradation, thus inhibiting focal adhesion disassembly during cell migration. As part of the ECS(RAB40B) complex, mediates LIMA1/EPLIN and RAP2 ubiquitination, thereby regulating actin cytoskeleton dynamics and stress fiber formation during cell migration. May form a cell surface vasopressin receptor. This chain is Cullin-5, found in Mus musculus (Mouse).